Here is a 389-residue protein sequence, read N- to C-terminus: 26S proteasome regulatory subunit 10B (389 aa).

Residue Lys-72 is modified to N6-acetyllysine. 174–181 (GPPGTGKT) serves as a coordination point for ATP. Lys-206 carries the post-translational modification N6-acetyllysine. Ser-244 is modified (phosphoserine).

The protein belongs to the AAA ATPase family. In terms of assembly, component of the 19S proteasome regulatory particle complex. The 26S proteasome consists of a 20S core particle (CP) and two 19S regulatory subunits (RP). The regulatory particle is made of a lid composed of 9 subunits, a base containing 6 ATPases including PSMC6 and few additional components. Interacts with PAAF1.

The protein localises to the cytoplasm. Its subcellular location is the nucleus. Its function is as follows. Component of the 26S proteasome, a multiprotein complex involved in the ATP-dependent degradation of ubiquitinated proteins. This complex plays a key role in the maintenance of protein homeostasis by removing misfolded or damaged proteins, which could impair cellular functions, and by removing proteins whose functions are no longer required. Therefore, the proteasome participates in numerous cellular processes, including cell cycle progression, apoptosis, or DNA damage repair. PSMC6 belongs to the heterohexameric ring of AAA (ATPases associated with diverse cellular activities) proteins that unfolds ubiquitinated target proteins that are concurrently translocated into a proteolytic chamber and degraded into peptides. In Bos taurus (Bovine), this protein is 26S proteasome regulatory subunit 10B (PSMC6).